Reading from the N-terminus, the 190-residue chain is Putative manganese efflux pump MntP (190 aa).

Helical transmembrane passes span 3-23, 37-57, 72-88, 111-131, 138-158, and 164-184; these read FLQI…CSVV, LVLA…GWFI, HWIA…KMIW, IILG…LAFV, VALS…WIGH, and FGKW…ANIV.

This sequence belongs to the MntP (TC 9.B.29) family.

It localises to the cell membrane. In terms of biological role, probably functions as a manganese efflux pump. This is Putative manganese efflux pump MntP from Corynebacterium glutamicum (strain ATCC 13032 / DSM 20300 / JCM 1318 / BCRC 11384 / CCUG 27702 / LMG 3730 / NBRC 12168 / NCIMB 10025 / NRRL B-2784 / 534).